The sequence spans 337 residues: Putative 2-aminoethylphosphonate-binding periplasmic protein (337 aa).

The N-terminal stretch at 1-21 (MKLSRLALLSVFALASAPSWA) is a signal peptide.

Belongs to the bacterial solute-binding protein 1 family.

The protein resides in the periplasm. Its function is as follows. Probably part of the PhnSTUV complex (TC 3.A.1.11.5) involved in 2-aminoethylphosphonate import. In Salmonella typhi, this protein is Putative 2-aminoethylphosphonate-binding periplasmic protein (phnS).